The chain runs to 97 residues: Co-chaperonin GroES (97 aa).

The protein belongs to the GroES chaperonin family. Heptamer of 7 subunits arranged in a ring. Interacts with the chaperonin GroEL.

It is found in the cytoplasm. Functionally, together with the chaperonin GroEL, plays an essential role in assisting protein folding. The GroEL-GroES system forms a nano-cage that allows encapsulation of the non-native substrate proteins and provides a physical environment optimized to promote and accelerate protein folding. GroES binds to the apical surface of the GroEL ring, thereby capping the opening of the GroEL channel. This is Co-chaperonin GroES from Arthrobacter sp. (strain FB24).